The primary structure comprises 482 residues: Cysteine--tRNA ligase (482 aa).

Cysteine 29 is a binding site for Zn(2+). Positions 31 to 41 (PTVYDFAHIGN) match the 'HIGH' region motif. Residues cysteine 224, histidine 249, and glutamate 253 each contribute to the Zn(2+) site. Residues 282–286 (KMSKS) carry the 'KMSKS' region motif. An ATP-binding site is contributed by lysine 285.

Belongs to the class-I aminoacyl-tRNA synthetase family. In terms of assembly, monomer. Zn(2+) serves as cofactor.

It localises to the cytoplasm. It catalyses the reaction tRNA(Cys) + L-cysteine + ATP = L-cysteinyl-tRNA(Cys) + AMP + diphosphate. This chain is Cysteine--tRNA ligase, found in Nitrobacter hamburgensis (strain DSM 10229 / NCIMB 13809 / X14).